Consider the following 1288-residue polypeptide: SH3 domain and tetratricopeptide repeat-containing protein 2 (1288 aa).

2 SH3 domains span residues 176–240 and 268–331; these read EGHF…PLPL and IGRG…PDSY. The span at 386-395 shows a compositional bias: polar residues; sequence NPPNDLSASQ. 2 disordered regions span residues 386 to 405 and 410 to 444; these read NPPN…VRPG and EHQA…LPEP. 8 TPR repeats span residues 528–561, 757–790, 836–869, 1001–1037, 1084–1118, 1119–1152, 1166–1199, and 1210–1244; these read ARLC…LNGA, RALC…GQLL, GVIY…AQEV, GRLL…FIDL, LKLY…LARR, LKAV…ATLA, LVAF…CPPW, and AKVY…AVLL.

As to expression, strongly expressed in brain and spinal cord. Expressed at equal level in spinal cord and sciatic nerve. Weakly expressed in striated muscle.

The polypeptide is SH3 domain and tetratricopeptide repeat-containing protein 2 (SH3TC2) (Homo sapiens (Human)).